Reading from the N-terminus, the 193-residue chain is Recombination protein RecR (193 aa).

The C4-type zinc-finger motif lies at 61–76; the sequence is CSSCNALSESEVCEIC. Positions 84-170 constitute a Toprim domain; it reads SQLCMVLHPR…TFTKIAQGVP (87 aa).

The protein belongs to the RecR family.

Functionally, may play a role in DNA repair. It seems to be involved in an RecBC-independent recombinational process of DNA repair. It may act with RecF and RecO. The sequence is that of Recombination protein RecR from Helicobacter pylori (strain P12).